The following is a 51-amino-acid chain: uncharacterized protein (51 aa).

The tract at residues 1–51 (MKRKAEVNEAIKNNNTPTESMDPNSYKTQYHDDPNFRGANRNSKQGQQGGM) is disordered. Composition is skewed to polar residues over residues 11–28 (IKNN…SYKT) and 40–51 (NRNSKQGQQGGM).

This is an uncharacterized protein from Bacillus subtilis (strain 168).